The chain runs to 29 residues: Protein YldA (29 aa).

A helical membrane pass occupies residues 5 to 25 (FYILIGFLIMAAIIVMAVLYL).

It is found in the cell inner membrane. The chain is Protein YldA from Escherichia coli (strain K12).